A 177-amino-acid polypeptide reads, in one-letter code: Large ribosomal subunit protein uL6 (177 aa).

It belongs to the universal ribosomal protein uL6 family. As to quaternary structure, part of the 50S ribosomal subunit.

Functionally, this protein binds to the 23S rRNA, and is important in its secondary structure. It is located near the subunit interface in the base of the L7/L12 stalk, and near the tRNA binding site of the peptidyltransferase center. The polypeptide is Large ribosomal subunit protein uL6 (Polynucleobacter asymbioticus (strain DSM 18221 / CIP 109841 / QLW-P1DMWA-1) (Polynucleobacter necessarius subsp. asymbioticus)).